The following is a 198-amino-acid chain: MTWVLASSSPRRKELLAQAGFTQAQFQFVQVSPDIDESQLALETPSAYVTRLALEKAQAGLALSRHLPHPKVIGSDTIVVLDGQLLGKPTDPQDAERMLTSLSGRTHTVMTAVAITNGKRALSRLCQTQVSFTSLSQQDIAKYVATGEPMDKAGAYGIQGLGGCFVSEISGSYSSVVGLPLVETRALLAAMMEQDDTL.

Asp76 (proton acceptor) is an active-site residue.

The protein belongs to the Maf family. YhdE subfamily. It depends on a divalent metal cation as a cofactor.

The protein localises to the cytoplasm. The enzyme catalyses dTTP + H2O = dTMP + diphosphate + H(+). It carries out the reaction UTP + H2O = UMP + diphosphate + H(+). In terms of biological role, nucleoside triphosphate pyrophosphatase that hydrolyzes dTTP and UTP. May have a dual role in cell division arrest and in preventing the incorporation of modified nucleotides into cellular nucleic acids. The polypeptide is dTTP/UTP pyrophosphatase (Shewanella denitrificans (strain OS217 / ATCC BAA-1090 / DSM 15013)).